The chain runs to 161 residues: Regulator of ribonuclease activity A (161 aa).

This sequence belongs to the RraA family. In terms of assembly, homotrimer. Binds to both RNA-binding sites in the C-terminal region of Rne and to RhlB.

The protein localises to the cytoplasm. Functionally, globally modulates RNA abundance by binding to RNase E (Rne) and regulating its endonucleolytic activity. Can modulate Rne action in a substrate-dependent manner by altering the composition of the degradosome. Modulates RNA-binding and helicase activities of the degradosome. In Shewanella oneidensis (strain ATCC 700550 / JCM 31522 / CIP 106686 / LMG 19005 / NCIMB 14063 / MR-1), this protein is Regulator of ribonuclease activity A.